We begin with the raw amino-acid sequence, 1904 residues long: Pericentriolar material 1 protein (1904 aa).

7 disordered regions span residues 1–135, 159–179, 265–303, 338–361, 376–407, 430–489, and 520–559; these read MATG…SGEP, QEDG…PQQE, HDSQ…QSDE, NSSF…TSAA, NSLA…EKLQ, SDMM…GTNN, and CHNR…LGDV. Basic and acidic residues predominate over residues 43 to 60; that stretch reads RSSEKNKKKLGGEAETRL. The segment covering 107–118 has biased composition (polar residues); the sequence is INFSDLDQINTN. Positions 171–212 form a coiled coil; that stretch reads SQARDPQQEAKEELENLKKQHDLLKRMLQQQEQLKALQGRQA. Residues 280–298 are compositionally biased toward polar residues; that stretch reads ESLSLTREISQSRNSSVSE. Positions 301–334 form a coiled coil; it reads SDEKAQLFNKMRMLQGKKQKMDKLLGELHTLRDQ. Residues 338–348 are compositionally biased toward low complexity; that stretch reads NSSFFPASSSP. Residues 349-361 are compositionally biased toward polar residues; sequence QRSIDQRSTTSAA. Residues 403–429 are a coiled coil; the sequence is TEKLQKLNEVRKRLNELRELVHYYEQT. The segment covering 442-452 has biased composition (acidic residues); it reads KEEEETEDSGS. Positions 461–470 are enriched in polar residues; the sequence is PVTNIRNPQG. Over residues 471–482 the composition is skewed to low complexity; the sequence is ISSWSEINSNSN. Residues 520-534 are compositionally biased toward basic and acidic residues; that stretch reads CHNREDDKHADLPHG. Residues 535 to 544 show a composition bias toward acidic residues; the sequence is EDDEVEEDRA. Coiled-coil stretches lie at residues 562–592 and 636–686; these read DAEF…VQDD and LNEK…LQSA. The tract at residues 686-706 is disordered; that stretch reads AGLGNSPANRQTSPATSTPAM. Polar residues predominate over residues 687 to 706; that stretch reads GLGNSPANRQTSPATSTPAM. Residues 731–768 are a coiled coil; the sequence is SEMRRHEILREELRRRRKQLEALMAEHQRRRELAETIS. The interval 773-840 is disordered; sequence SVKSEGSEAQ…PSMNDSFSAY (68 aa). Residues 779–804 are compositionally biased toward polar residues; the sequence is SEAQRTPQQSRTENRTMATWGGSTQC. A compositionally biased stretch (acidic residues) spans 806-830; sequence LDEEDGDEDGYLSDGLDQAEEEEDA. Coiled coils occupy residues 895–927 and 970–1000; these read SELS…CQTL and TQLS…CQEK. Disordered regions lie at residues 991–1018, 1063–1082, and 1088–1225; these read HQQE…SPVF, GFPQ…ASGK, and FPKP…TGYD. Composition is skewed to polar residues over residues 1064 to 1073 and 1093 to 1102; these read FPQSSEQQQH and ESSSSTGAEN. Positions 1103–1117 are enriched in basic and acidic residues; sequence QRSHRQPEDEVEKRS. Over residues 1141–1150 the composition is skewed to polar residues; the sequence is SVQSIASGHK. Residues 1151–1162 show a composition bias toward basic and acidic residues; sequence NQSDTSRRRNFD. Low complexity predominate over residues 1173–1182; it reads PDPVDPTTVT. The stretch at 1421-1447 forms a coiled coil; sequence IHLDQALARMREYERMKIEAESTLDSE. Over residues 1616-1625 the composition is skewed to basic and acidic residues; that stretch reads AKEDKDETET. 3 disordered regions span residues 1616-1741, 1774-1838, and 1865-1904; these read AKED…VKGE, MKTE…SDED, and EAQT…AQSA. A compositionally biased stretch (acidic residues) spans 1649 to 1658; it reads SDQEEDEESE. A compositionally biased stretch (polar residues) spans 1668-1678; that stretch reads KAETQALTNYG. The segment covering 1680–1695 has biased composition (acidic residues); it reads GEDENEDEEIEFEEGP. Polar residues-rich tracts occupy residues 1698 to 1720, 1728 to 1737, and 1779 to 1791; these read VQTS…SQEL, ILSSEQQSVN, and SSSS…TQML. Over residues 1800-1812 the composition is skewed to low complexity; it reads SSAGSSESSMAGS. The segment covering 1881–1897 has biased composition (basic and acidic residues); it reads EQDRELVGDAQTLKEPE.

Belongs to the PCM1 family. In terms of assembly, self-associates.

Its subcellular location is the cytoplasm. It localises to the cytoskeleton. It is found in the microtubule organizing center. The protein resides in the centrosome. The protein localises to the cytoplasmic granule. Its subcellular location is the centriolar satellite. It localises to the cilium basal body. Required for centrosome assembly and function. Essential for the correct localization of several centrosomal proteins including CETN3 and PCNT. Required to anchor microtubules to the centrosome. Probably involved in the biogenesis of cilia. The chain is Pericentriolar material 1 protein (PCM1) from Gallus gallus (Chicken).